We begin with the raw amino-acid sequence, 358 residues long: Uroporphyrinogen decarboxylase (358 aa).

Substrate-binding positions include 36 to 40, D85, Y160, S215, and H338; that span reads RQAGR.

The protein belongs to the uroporphyrinogen decarboxylase family. As to quaternary structure, homodimer.

It is found in the cytoplasm. It catalyses the reaction uroporphyrinogen III + 4 H(+) = coproporphyrinogen III + 4 CO2. It participates in porphyrin-containing compound metabolism; protoporphyrin-IX biosynthesis; coproporphyrinogen-III from 5-aminolevulinate: step 4/4. Its function is as follows. Catalyzes the decarboxylation of four acetate groups of uroporphyrinogen-III to yield coproporphyrinogen-III. In Corynebacterium glutamicum (strain R), this protein is Uroporphyrinogen decarboxylase.